A 173-amino-acid chain; its full sequence is Bifunctional protein PyrR (173 aa).

Positions 93-105 (VILVDDVLYTGRT) match the PRPP-binding motif.

The protein belongs to the purine/pyrimidine phosphoribosyltransferase family. PyrR subfamily. Homodimer and homohexamer; in equilibrium.

It catalyses the reaction UMP + diphosphate = 5-phospho-alpha-D-ribose 1-diphosphate + uracil. Regulates transcriptional attenuation of the pyrimidine nucleotide (pyr) operon by binding in a uridine-dependent manner to specific sites on pyr mRNA. This disrupts an antiterminator hairpin in the RNA and favors formation of a downstream transcription terminator, leading to a reduced expression of downstream genes. Functionally, also displays a weak uracil phosphoribosyltransferase activity which is not physiologically significant. In Streptococcus suis (strain 05ZYH33), this protein is Bifunctional protein PyrR.